A 276-amino-acid chain; its full sequence is Expansin-like A3 (276 aa).

Residues 1–28 (MAVLLSILSSSFLLLLAASSSSTPRASA) form the signal peptide. The Expansin-like EG45 domain occupies 52-158 (GGGCGYGAMA…RRIPCDYKDK (107 aa)). 2 N-linked (GlcNAc...) asparagine glycosylation sites follow: Asn115 and Asn159. One can recognise an Expansin-like CBD domain in the interval 172 to 255 (NNLVIKFLYQ…NWQPGQVYDT (84 aa)).

Belongs to the expansin family. Expansin-like A subfamily.

Its subcellular location is the secreted. This is Expansin-like A3 (EXLA3) from Oryza sativa subsp. japonica (Rice).